The chain runs to 245 residues: Fibroblast growth factor 3 (245 aa).

Positions 1-17 (MGLIWLLLLSLLEPSWP) are cleaved as a signal peptide. N-linked (GlcNAc...) asparagine glycosylation is present at asparagine 65. Disordered regions lie at residues 137-181 (GSSG…FLPR) and 195-245 (QSSQ…LAVA). Over residues 161–173 (GRPRRGFKTRRTQ) the composition is skewed to basic residues. Positions 226 to 238 (TLSTRATPSTQLH) are enriched in polar residues.

Belongs to the heparin-binding growth factors family. As to quaternary structure, interacts with FGFR1 and FGFR2. Affinity between fibroblast growth factors (FGFs) and their receptors is increased by heparan sulfate glycosaminoglycans that function as coreceptors. Glycosylated.

Its subcellular location is the nucleus. It is found in the endoplasmic reticulum. It localises to the golgi apparatus. In terms of biological role, plays an important role in the regulation of embryonic development, cell proliferation, and cell differentiation. Required for normal ear development. The chain is Fibroblast growth factor 3 (Fgf3) from Mus musculus (Mouse).